Consider the following 264-residue polypeptide: Cyclin-P1-1 (264 aa).

The segment at methionine 1–glutamate 25 is disordered.

Belongs to the cyclin family. Cyclin U/P subfamily.

This is Cyclin-P1-1 (CYCP1-1) from Oryza sativa subsp. japonica (Rice).